Here is a 209-residue protein sequence, read N- to C-terminus: Guanylate kinase (209 aa).

One can recognise a Guanylate kinase-like domain in the interval 5-182; that stretch reads GLLIVISGPS…AVTKINSIIV (178 aa). 12–19 lines the ATP pocket; it reads GPSGAGKG.

The protein belongs to the guanylate kinase family.

It is found in the cytoplasm. It carries out the reaction GMP + ATP = GDP + ADP. In terms of biological role, essential for recycling GMP and indirectly, cGMP. This chain is Guanylate kinase, found in Clostridium acetobutylicum (strain ATCC 824 / DSM 792 / JCM 1419 / IAM 19013 / LMG 5710 / NBRC 13948 / NRRL B-527 / VKM B-1787 / 2291 / W).